We begin with the raw amino-acid sequence, 323 residues long: Dehydrogenase/reductase SDR family member 7B (323 aa).

At 1–4 the chain is on the cytoplasmic side; the sequence is MDLT. The helical; Signal-anchor for type II membrane protein transmembrane segment at 5-25 threads the bilayer; sequence SWAIFPLLLASIGVYGLYKLL. Topologically, residues 26–272 are lumenal; that stretch reads QKLRSGAYLQ…AVGERRKELL (247 aa). NAD(+) contacts are provided by serine 46 and leucine 48. Position 178 (serine 178) interacts with substrate. The NAD(+) site is built by tyrosine 191, lysine 195, and threonine 226. The active-site Proton acceptor is the tyrosine 191.

It belongs to the short-chain dehydrogenases/reductases (SDR) family.

It localises to the endoplasmic reticulum membrane. Putative oxidoreductase. This Xenopus laevis (African clawed frog) protein is Dehydrogenase/reductase SDR family member 7B (dhrs7b).